The sequence spans 143 residues: Nucleoside diphosphate kinase (143 aa).

Positions 11, 59, 87, 93, 104, and 114 each coordinate ATP. The Pros-phosphohistidine intermediate role is filled by His-117.

The protein belongs to the NDK family. As to quaternary structure, homotetramer. Mg(2+) is required as a cofactor.

Its subcellular location is the cytoplasm. It carries out the reaction a 2'-deoxyribonucleoside 5'-diphosphate + ATP = a 2'-deoxyribonucleoside 5'-triphosphate + ADP. It catalyses the reaction a ribonucleoside 5'-diphosphate + ATP = a ribonucleoside 5'-triphosphate + ADP. In terms of biological role, major role in the synthesis of nucleoside triphosphates other than ATP. The ATP gamma phosphate is transferred to the NDP beta phosphate via a ping-pong mechanism, using a phosphorylated active-site intermediate. This is Nucleoside diphosphate kinase from Escherichia coli O7:K1 (strain IAI39 / ExPEC).